The chain runs to 108 residues: Inner membrane protein H108R (108 aa).

Residues 10-32 form a helical membrane-spanning segment; sequence LIVIITILITTRELSTTMLIVSL. Positions 49 to 64 are enriched in polar residues; sequence ENNTFSMPQKNSFNES. Residues 49–69 form a disordered region; sequence ENNTFSMPQKNSFNESYNKDK. N-linked (GlcNAc...) asparagine; by host glycans are attached at residues asparagine 50 and asparagine 62.

Belongs to the asfivirus H108R family.

The protein localises to the virion membrane. In African swine fever virus (strain Badajoz 1971 Vero-adapted) (Ba71V), this protein is Inner membrane protein H108R.